The sequence spans 86 residues: Large ribosomal subunit protein bL27 (86 aa).

A disordered region spans residues 1–21 (MAHKKAAGSSRNGRDSESKRL).

Belongs to the bacterial ribosomal protein bL27 family.

This chain is Large ribosomal subunit protein bL27, found in Hahella chejuensis (strain KCTC 2396).